The primary structure comprises 347 residues: Dolichyl-diphosphooligosaccharide--protein glycosyltransferase subunit TUSC3 (347 aa).

Residues 1-41 (MGARGAPSRRRQAGRRPRYLPTGSFPFLLLLLLLCIQLGGG) form the signal peptide. At 42–196 (QKKKENLLAE…DVHIRVFRPP (155 aa)) the chain is on the lumenal side. In terms of domain architecture, Thioredoxin spans 59–187 (WSSRRSVFRM…LAKWIADRTD (129 aa)). N83 is a glycosylation site (N-linked (GlcNAc...) asparagine). An intrachain disulfide couples C99 to C102. A helical transmembrane segment spans residues 197 to 217 (NYSGTIALALLVSLVGGLLYL). Residues 218-221 (RRNN) lie on the Cytoplasmic side of the membrane. Residues 222–242 (LEFIYNKTGWAMVSLCIVFAM) traverse the membrane as a helical segment. The Lumenal portion of the chain corresponds to 243-276 (TSGQMWNHIRGPPYAHKNPHNGQVSYIHGSSQVQ). Residues 277–297 (FVAESHIILVLNAAITMGMDL) form a helical membrane-spanning segment. Residues 298–312 (LNEAATSKGDVGKRR) lie on the Cytoplasmic side of the membrane. The helical transmembrane segment at 313-333 (IICLVGLGLVVFFFSFLLSIF) threads the bilayer. Topologically, residues 334 to 347 (RSKYHGYPYSFLIK) are lumenal.

It belongs to the OST3/OST6 family. As to quaternary structure, accessory component of the STT3B-containing form of the oligosaccharyltransferase (OST) complex. OST exists in two different complex forms which contain common core subunits RPN1, RPN2, OST48, OST4, DAD1 and TMEM258, either STT3A or STT3B as catalytic subunits, and form-specific accessory subunits. OST can form stable complexes with the Sec61 complex or with both the Sec61 and TRAP complexes. The association of TUSC3 or MAGT1 with the STT3B-containing complex seems to be mutually exclusvice.

Its subcellular location is the endoplasmic reticulum membrane. Its pathway is protein modification; protein glycosylation. In terms of biological role, acts as accessory component of the N-oligosaccharyl transferase (OST) complex which catalyzes the transfer of a high mannose oligosaccharide from a lipid-linked oligosaccharide donor to an asparagine residue within an Asn-X-Ser/Thr consensus motif in nascent polypeptide chains. Involved in N-glycosylation of STT3B-dependent substrates. Specifically required for the glycosylation of a subset of acceptor sites that are near cysteine residues; in this function seems to act redundantly with MAGT1. In its oxidized form proposed to form transient mixed disulfides with a glycoprotein substrate to facilitate access of STT3B to the unmodified acceptor site. Also has oxidoreductase-independent functions in the STT3B-containing OST complex possibly involving substrate recognition. Could indirectly play a role in Mg(2+) transport. This Bos taurus (Bovine) protein is Dolichyl-diphosphooligosaccharide--protein glycosyltransferase subunit TUSC3 (TUSC3).